A 786-amino-acid chain; its full sequence is Progesterone receptor (786 aa).

Residues 1-10 are compositionally biased toward basic and acidic residues; that stretch reads MTEVKSKETR. Disordered stretches follow at residues 1 to 95, 110 to 212, and 252 to 279; these read MTEV…SKDC, AAPW…ASPA, and SAFGPRSSPSVPAADLAEYGYPPPDGKE. Residues 1 to 420 are modulating, Pro-Rich; it reads MTEVKSKETR…YSFESLPQKI (420 aa). Lysine 7 is covalently cross-linked (Glycyl lysine isopeptide (Lys-Gly) (interchain with G-Cter in SUMO)). The span at 48–79 shows a compositional bias: acidic residues; the sequence is DEEEEEEENEEEEEEEEPQQREEEEEEEEEDR. Residues 143 to 154 show a composition bias toward pro residues; it reads APGPSQPRPGAP. Residues 186–197 are compositionally biased toward basic and acidic residues; the sequence is AEERGFPERDAG. The span at 203-212 shows a compositional bias: low complexity; that stretch reads LAPAAAASPA. Phosphoserine is present on residues serine 210 and serine 259. Lysine 294 is covalently cross-linked (Glycyl lysine isopeptide (Lys-Gly) (interchain with G-Cter in SUMO); alternate). Lysine 294 is covalently cross-linked (Glycyl lysine isopeptide (Lys-Gly) (interchain with G-Cter in ubiquitin); alternate). Residue lysine 385 forms a Glycyl lysine isopeptide (Lys-Gly) (interchain with G-Cter in SUMO) linkage. 2 consecutive NR C4-type zinc fingers follow at residues 421 to 441 and 457 to 481; these read CLICGDEASGCHYGVLTCGSC and CAGRNDCIVDKIRRKNCPACRLRKC. The segment at residues 421-486 is a DNA-binding region (nuclear receptor); the sequence is CLICGDEASG…RLRKCCQAGM (66 aa). Position 529 is a phosphoserine (serine 529). The 235-residue stretch at 532–766 folds into the NR LBD domain; that stretch reads QEIPFVPPMI…EFPEMMSEVI (235 aa).

This sequence belongs to the nuclear hormone receptor family. NR3 subfamily. Phosphorylation of Ser-529 is sharply increased upon progesterone treatment, whereas phosphorylation of Ser-210 and Ser-259 is modestly induced by progesterone. Post-translationally, ubiquitinated. Ubiquitination is increased by progesterone and represses sumoylation at the same site. In terms of processing, sumoylation is hormone-dependent and represses transcriptional activity. Sumoylation on all three sites is enhanced by PIAS3. Desumoylated by SENP1. Sumoylation on Lys-385, the main site of sumoylation, is repressed by ubiquitination on the same site. As to expression, oviduct and bursa of Fabricius.

The protein resides in the nucleus. The protein localises to the cytoplasm. The steroid hormones and their receptors are involved in the regulation of eukaryotic gene expression and affect cellular proliferation and differentiation in target tissues. This chain is Progesterone receptor (PGR), found in Gallus gallus (Chicken).